The primary structure comprises 61 residues: Small ribosomal subunit protein uS14 (61 aa).

Positions 24, 27, 40, and 43 each coordinate Zn(2+).

It belongs to the universal ribosomal protein uS14 family. Zinc-binding uS14 subfamily. In terms of assembly, part of the 30S ribosomal subunit. Contacts proteins S3 and S10. Zn(2+) is required as a cofactor.

Its function is as follows. Binds 16S rRNA, required for the assembly of 30S particles and may also be responsible for determining the conformation of the 16S rRNA at the A site. The sequence is that of Small ribosomal subunit protein uS14 from Borrelia hermsii (strain HS1 / DAH).